The primary structure comprises 595 residues: Aspartate--tRNA(Asp/Asn) ligase (595 aa).

An L-aspartate-binding site is contributed by E175. The aspartate stretch occupies residues 199–202; the sequence is QQYK. Residues R221 and H454 each contribute to the L-aspartate site. 221 to 223 contacts ATP; it reads RDE. E488 lines the ATP pocket. R495 is a binding site for L-aspartate. Position 540-543 (540-543) interacts with ATP; it reads GIDR.

It belongs to the class-II aminoacyl-tRNA synthetase family. Type 1 subfamily. As to quaternary structure, homodimer.

It is found in the cytoplasm. It carries out the reaction tRNA(Asx) + L-aspartate + ATP = L-aspartyl-tRNA(Asx) + AMP + diphosphate. Aspartyl-tRNA synthetase with relaxed tRNA specificity since it is able to aspartylate not only its cognate tRNA(Asp) but also tRNA(Asn). Reaction proceeds in two steps: L-aspartate is first activated by ATP to form Asp-AMP and then transferred to the acceptor end of tRNA(Asp/Asn). The sequence is that of Aspartate--tRNA(Asp/Asn) ligase from Brucella abortus (strain S19).